The primary structure comprises 196 residues: Imidazoleglycerol-phosphate dehydratase (196 aa).

This sequence belongs to the imidazoleglycerol-phosphate dehydratase family.

It is found in the cytoplasm. The catalysed reaction is D-erythro-1-(imidazol-4-yl)glycerol 3-phosphate = 3-(imidazol-4-yl)-2-oxopropyl phosphate + H2O. It functions in the pathway amino-acid biosynthesis; L-histidine biosynthesis; L-histidine from 5-phospho-alpha-D-ribose 1-diphosphate: step 6/9. This Solidesulfovibrio magneticus (strain ATCC 700980 / DSM 13731 / RS-1) (Desulfovibrio magneticus) protein is Imidazoleglycerol-phosphate dehydratase.